Here is a 273-residue protein sequence, read N- to C-terminus: Shikimate dehydrogenase (NADP(+)) (273 aa).

Shikimate is bound by residues 14–16 (SLS) and Thr-59. Lys-63 functions as the Proton acceptor in the catalytic mechanism. Shikimate-binding residues include Asn-84 and Asp-99. Residues 122 to 126 (GAGGA) and Met-212 contribute to the NADP(+) site. Position 214 (Tyr-214) interacts with shikimate. Gly-235 contributes to the NADP(+) binding site.

Belongs to the shikimate dehydrogenase family. Homodimer.

It catalyses the reaction shikimate + NADP(+) = 3-dehydroshikimate + NADPH + H(+). The protein operates within metabolic intermediate biosynthesis; chorismate biosynthesis; chorismate from D-erythrose 4-phosphate and phosphoenolpyruvate: step 4/7. Functionally, involved in the biosynthesis of the chorismate, which leads to the biosynthesis of aromatic amino acids. Catalyzes the reversible NADPH linked reduction of 3-dehydroshikimate (DHSA) to yield shikimate (SA). This Aeropyrum pernix (strain ATCC 700893 / DSM 11879 / JCM 9820 / NBRC 100138 / K1) protein is Shikimate dehydrogenase (NADP(+)).